Here is a 368-residue protein sequence, read N- to C-terminus: tRNA/tmRNA (uracil-C(5))-methyltransferase (368 aa).

S-adenosyl-L-methionine-binding residues include Q186, Y214, N219, E235, and D295. The active-site Nucleophile is C320. E354 (proton acceptor) is an active-site residue.

This sequence belongs to the class I-like SAM-binding methyltransferase superfamily. RNA M5U methyltransferase family. TrmA subfamily.

The catalysed reaction is uridine(54) in tRNA + S-adenosyl-L-methionine = 5-methyluridine(54) in tRNA + S-adenosyl-L-homocysteine + H(+). It catalyses the reaction uridine(341) in tmRNA + S-adenosyl-L-methionine = 5-methyluridine(341) in tmRNA + S-adenosyl-L-homocysteine + H(+). Functionally, dual-specificity methyltransferase that catalyzes the formation of 5-methyluridine at position 54 (m5U54) in all tRNAs, and that of position 341 (m5U341) in tmRNA (transfer-mRNA). The sequence is that of tRNA/tmRNA (uracil-C(5))-methyltransferase from Aromatoleum aromaticum (strain DSM 19018 / LMG 30748 / EbN1) (Azoarcus sp. (strain EbN1)).